Here is a 126-residue protein sequence, read N- to C-terminus: UPF0102 protein TP_0913 (126 aa).

Belongs to the UPF0102 family.

The protein is UPF0102 protein TP_0913 of Treponema pallidum (strain Nichols).